Consider the following 341-residue polypeptide: DNA-directed RNA polymerase subunit alpha (341 aa).

Residues 1-233 are alpha N-terminal domain (alpha-NTD); it reads MIRDEIPISA…NLFIPFLHAE (233 aa). The alpha C-terminal domain (alpha-CTD) stretch occupies residues 265–341; it reads TKGVTFKHIF…NLPKNKLHFH (77 aa).

It belongs to the RNA polymerase alpha chain family. As to quaternary structure, in plastids the minimal PEP RNA polymerase catalytic core is composed of four subunits: alpha, beta, beta', and beta''. When a (nuclear-encoded) sigma factor is associated with the core the holoenzyme is formed, which can initiate transcription.

It is found in the plastid. It localises to the chloroplast. The enzyme catalyses RNA(n) + a ribonucleoside 5'-triphosphate = RNA(n+1) + diphosphate. In terms of biological role, DNA-dependent RNA polymerase catalyzes the transcription of DNA into RNA using the four ribonucleoside triphosphates as substrates. This Takakia lepidozioides (Moss) protein is DNA-directed RNA polymerase subunit alpha.